Reading from the N-terminus, the 123-residue chain is MIKRPRWQYVLLIALALLALATLLVPCMVRTESELRIRAGQQGLSLPDGFYVYQRLDQRGIRIKSITPEGDGLVIRLDSPEQQLLAREALQNILPPGYIIALSESPVPTHWVREFARAPLNLG.

Over 1-8 (MIKRPRWQ) the chain is Cytoplasmic. Residues 9-29 (YVLLIALALLALATLLVPCMV) traverse the membrane as a helical segment. Over 30–123 (RTESELRIRA…EFARAPLNLG (94 aa)) the chain is Periplasmic.

It belongs to the MzrA family. In terms of assembly, interacts with EnvZ.

The protein localises to the cell inner membrane. Its function is as follows. Modulates the activity of the EnvZ/OmpR two-component regulatory system, probably by directly modulating EnvZ enzymatic activity and increasing stability of phosphorylated OmpR. The polypeptide is Modulator protein MzrA (Serratia proteamaculans (strain 568)).